Consider the following 456-residue polypeptide: Keratin, type I cuticular Ha8 (456 aa).

The head stretch occupies residues 1-104 (MTSSYSSSSC…YGENTLNGHE (104 aa)). Residues 104–415 (EKETMQFLND…NLLESEDCKL (312 aa)) enclose the IF rod domain. A coil 1A region spans residues 105-139 (KETMQFLNDRLANYLEKVRQLEQENAELEATLLER). Residues 140-150 (SKCHESTVCPD) are linker 1. The interval 151–251 (YQSYFHTIEE…HEQEVKILRS (101 aa)) is coil 1B. The linker 12 stretch occupies residues 252 to 267 (QLGEKLRIELDIEPTI). Residues 268 to 411 (DLNRVLGEMR…ATYRNLLESE (144 aa)) form a coil 2 region. The interval 412–456 (DCKLPCNPCSTSPSCVTAPCAPRPSCGPCTTCGPTCGASTTGSRF) is tail.

This sequence belongs to the intermediate filament family.

This is Keratin, type I cuticular Ha8 (KRT38) from Homo sapiens (Human).